The following is a 196-amino-acid chain: Putative NADH dehydrogenase/NAD(P)H nitroreductase xcc-b100_0585 (196 aa).

The protein belongs to the nitroreductase family. HadB/RutE subfamily. FMN is required as a cofactor.

This is Putative NADH dehydrogenase/NAD(P)H nitroreductase xcc-b100_0585 from Xanthomonas campestris pv. campestris (strain B100).